A 542-amino-acid chain; its full sequence is CTP synthase (542 aa).

The segment at 1-265 (MARYVFITGG…DSEVLSAFGI (265 aa)) is amidoligase domain. Ser13 serves as a coordination point for CTP. Position 13 (Ser13) interacts with UTP. An ATP-binding site is contributed by 14 to 19 (SLGKGI). Tyr54 is a binding site for L-glutamine. Asp71 contacts ATP. The Mg(2+) site is built by Asp71 and Glu139. Residues 146–148 (DIE), 186–191 (KTKPTQ), and Lys222 contribute to the CTP site. Residues 186 to 191 (KTKPTQ) and Lys222 contribute to the UTP site. A Glutamine amidotransferase type-1 domain is found at 291 to 541 (TIAVVGKYTG…IEAAIEQSRL (251 aa)). Gly353 contributes to the L-glutamine binding site. Cys380 acts as the Nucleophile; for glutamine hydrolysis in catalysis. L-glutamine contacts are provided by residues 381–384 (FGMQ), Glu404, and Arg469. Catalysis depends on residues His514 and Glu516.

It belongs to the CTP synthase family. As to quaternary structure, homotetramer.

The enzyme catalyses UTP + L-glutamine + ATP + H2O = CTP + L-glutamate + ADP + phosphate + 2 H(+). The catalysed reaction is L-glutamine + H2O = L-glutamate + NH4(+). It carries out the reaction UTP + NH4(+) + ATP = CTP + ADP + phosphate + 2 H(+). The protein operates within pyrimidine metabolism; CTP biosynthesis via de novo pathway; CTP from UDP: step 2/2. Allosterically activated by GTP, when glutamine is the substrate; GTP has no effect on the reaction when ammonia is the substrate. The allosteric effector GTP functions by stabilizing the protein conformation that binds the tetrahedral intermediate(s) formed during glutamine hydrolysis. Inhibited by the product CTP, via allosteric rather than competitive inhibition. Catalyzes the ATP-dependent amination of UTP to CTP with either L-glutamine or ammonia as the source of nitrogen. Regulates intracellular CTP levels through interactions with the four ribonucleotide triphosphates. This is CTP synthase from Brucella melitensis biotype 2 (strain ATCC 23457).